Consider the following 461-residue polypeptide: Glutamyl-tRNA reductase (461 aa).

Residues 50–53 (TCNR), S111, 116–118 (EPQ), and Q122 each bind substrate. The active-site Nucleophile is C51. 191 to 196 (GAGEMA) is an NADP(+) binding site.

Belongs to the glutamyl-tRNA reductase family. In terms of assembly, homodimer.

The enzyme catalyses (S)-4-amino-5-oxopentanoate + tRNA(Glu) + NADP(+) = L-glutamyl-tRNA(Glu) + NADPH + H(+). It functions in the pathway porphyrin-containing compound metabolism; protoporphyrin-IX biosynthesis; 5-aminolevulinate from L-glutamyl-tRNA(Glu): step 1/2. Its function is as follows. Catalyzes the NADPH-dependent reduction of glutamyl-tRNA(Glu) to glutamate 1-semialdehyde (GSA). In Syntrophobacter fumaroxidans (strain DSM 10017 / MPOB), this protein is Glutamyl-tRNA reductase.